We begin with the raw amino-acid sequence, 333 residues long: Peroxisome biogenesis protein 2 (333 aa).

At 1–38 (MTPSTPADDAWIRSYQRLLPESQSLLASRRSVIPVAIS) the chain is on the peroxisomal matrix side. A helical transmembrane segment spans residues 39 to 65 (RVNQFDAARLDVEMSAMLKEQLVKVFT). Residues 66 to 71 (LMKPGM) are Cytoplasmic-facing. Residues 72–97 (LFQYEPELDAFLEFLIWRFSIWVDKP) traverse the membrane as a helical segment. At 98–131 (TPGNALMNLRYRDERGVVAQHLGKVRTGLEGPGL) the chain is on the peroxisomal matrix side. The chain crosses the membrane as a helical span at residues 132–158 (TSPQKIWYCVASVGGQYLFSRLQSFSA). The Cytoplasmic portion of the chain corresponds to 159–168 (FRRWGDSEQR). A helical transmembrane segment spans residues 169-199 (PLARRLWTLVQRIEGIYKAASFLNLLSFLYT). Over 200 to 226 (GRYRNLIEKALKARLVYRSPHMNRSVS) the chain is Peroxisomal matrix. The helical transmembrane segment at 227 to 250 (FEYMNRQLVWNEFSEMLLLLLPLL) threads the bilayer. Over 251-333 (NSSAVKNILS…IQREGVSSGK (83 aa)) the chain is Cytoplasmic. Zn(2+) is bound by residues Cys-277, Cys-280, Cys-293, His-295, Cys-298, Cys-301, Cys-314, and Cys-317. Residues 277-318 (CPICQVDPAIPFIALPCQHRYCYYCIRTRCASAASFRCLRCN) form an RING-type zinc finger.

This sequence belongs to the pex2/pex10/pex12 family. As to quaternary structure, component of the PEX2-PEX10-PEX12 retrotranslocation channel. Interacts with DSK2a and DSK2b. Expressed in roots, stems, leaves, flowers, pollen, ovules, seeds and siliques.

The protein localises to the peroxisome membrane. The enzyme catalyses [E2 ubiquitin-conjugating enzyme]-S-ubiquitinyl-L-cysteine + [acceptor protein]-L-cysteine = [E2 ubiquitin-conjugating enzyme]-L-cysteine + [acceptor protein]-S-ubiquitinyl-L-cysteine.. It participates in protein modification; protein ubiquitination. In terms of biological role, E3 ubiquitin-protein ligase component of a retrotranslocation channel required for peroxisome organization by mediating export of the PEX5 receptor from peroxisomes to the cytosol, thereby promoting PEX5 recycling. The retrotranslocation channel is composed of PEX2, PEX10 and PEX12; each subunit contributing transmembrane segments that coassemble into an open channel that specifically allows the passage of PEX5 through the peroxisomal membrane. PEX2 also regulates peroxisome organization by acting as a E3 ubiquitin-protein ligase. PEX2 ubiquitinates PEX5 during its passage through the retrotranslocation channel: catalyzes monoubiquitination of PEX5 at 'Cys-6', a modification that acts as a signal for PEX5 extraction into the cytosol. The sequence is that of Peroxisome biogenesis protein 2 (PEX2) from Arabidopsis thaliana (Mouse-ear cress).